A 536-amino-acid polypeptide reads, in one-letter code: Organic anion transporter 3 (536 aa).

Over 1-11 the chain is Cytoplasmic; the sequence is MTFSEILDRVG. Ser-4 bears the Phosphoserine mark. A helical membrane pass occupies residues 12 to 32; that stretch reads SMGPFQYLHVTLLALPVLGIA. Topologically, residues 33 to 123 are extracellular; the sequence is NHNLLQIFTA…LVCSSNKLKE (91 aa). Asn-81 and Asn-86 each carry an N-linked (GlcNAc...) asparagine glycan. A helical membrane pass occupies residues 124–144; sequence MAQSIFMAGILVGGPVIGELS. The Cytoplasmic segment spans residues 145-158; that stretch reads DRFGRKPILTWSYL. The helical transmembrane segment at 159–179 threads the bilayer; sequence MLAASGSGAAFSPSLPVYMIF. Residue Arg-180 is a topological domain, extracellular. A helical transmembrane segment spans residues 181 to 201; sequence FLCGCSISGISLSTVILNVEW. Topologically, residues 202 to 212 are cytoplasmic; the sequence is VPTSMRAISST. A helical transmembrane segment spans residues 213–233; it reads SIGYCYTIGQFILSGLAYAIP. The Extracellular segment spans residues 234–236; sequence QWR. Residues 237 to 257 traverse the membrane as a helical segment; sequence WLQLTSSAPFFIFSLLSWWVP. The Cytoplasmic portion of the chain corresponds to 258 to 327; it reads ESIRWLVLSG…FRVSILRRVT (70 aa). Residues 328-348 form a helical membrane-spanning segment; sequence FCLSLAWFSTGFAYYSLAMGV. Topologically, residues 349–354 are extracellular; sequence EEFGVN. The helical transmembrane segment at 355–375 threads the bilayer; the sequence is IYILQIIFGGVDIPAKFITIL. At 376-383 the chain is on the cytoplasmic side; the sequence is SLSYLGRR. Residues 384–404 traverse the membrane as a helical segment; the sequence is ITQSFLLLLAGGAILALIFVP. Topologically, residues 405–411 are extracellular; sequence SEMQLLR. Residues 412-432 traverse the membrane as a helical segment; that stretch reads TALAVFGKGCLSGSFSCLFLY. The Cytoplasmic segment spans residues 433–471; that stretch reads TSELYPTVLRQTGMGISNVWARVGSMIAPLVKITGELQP. Residues 472-492 traverse the membrane as a helical segment; that stretch reads FIPNVIFGTTALLGGSAAFFL. Residues 493-536 lie on the Extracellular side of the membrane; that stretch reads LETLNRPLPETIEDIQNWHKQVQKTKQESEAEKASQIIPLKTGG. The disordered stretch occupies residues 515–536; sequence QKTKQESEAEKASQIIPLKTGG.

It belongs to the major facilitator (TC 2.A.1) superfamily. Organic cation transporter (TC 2.A.1.19) family. In terms of tissue distribution, expressed in the liver, brain, kidney, choroid plexus and weakly in the eye. Moderately expressed (at protein level) in the brain capillary endothelial cells (BCEC).

It localises to the basolateral cell membrane. The catalysed reaction is estrone 3-sulfate(out) + glutarate(in) = estrone 3-sulfate(in) + glutarate(out). The enzyme catalyses estrone 3-sulfate(in) + 2-oxoglutarate(out) = estrone 3-sulfate(out) + 2-oxoglutarate(in). It catalyses the reaction glutarate(in) + 2-oxoglutarate(out) = glutarate(out) + 2-oxoglutarate(in). It carries out the reaction urate(in) + 2-oxoglutarate(out) = urate(out) + 2-oxoglutarate(in). The catalysed reaction is taurocholate(out) + glutarate(in) = taurocholate(in) + glutarate(out). The enzyme catalyses dehydroepiandrosterone 3-sulfate(out) + glutarate(in) = dehydroepiandrosterone 3-sulfate(in) + glutarate(out). It catalyses the reaction prostaglandin F2alpha(out) + glutarate(in) = prostaglandin F2alpha(in) + glutarate(out). It carries out the reaction prostaglandin F2alpha(out) + 2-oxoglutarate(in) = prostaglandin F2alpha(in) + 2-oxoglutarate(out). The catalysed reaction is (R)-carnitine(out) + 2-oxoglutarate(in) = (R)-carnitine(in) + 2-oxoglutarate(out). The enzyme catalyses glutarate(in) + (R)-carnitine(out) = glutarate(out) + (R)-carnitine(in). It catalyses the reaction prostaglandin E2(out) + 2-oxoglutarate(in) = prostaglandin E2(in) + 2-oxoglutarate(out). It carries out the reaction prostaglandin E2(out) + glutarate(in) = prostaglandin E2(in) + glutarate(out). The catalysed reaction is urate(in) + glutarate(out) = urate(out) + glutarate(in). The enzyme catalyses taurocholate(out) + 2-oxoglutarate(in) = taurocholate(in) + 2-oxoglutarate(out). It catalyses the reaction dehydroepiandrosterone 3-sulfate(out) + 2-oxoglutarate(in) = dehydroepiandrosterone 3-sulfate(in) + 2-oxoglutarate(out). It carries out the reaction kynurenate(out) + a dicarboxylate(in) = kynurenate(in) + a dicarboxylate(out). The catalysed reaction is (indol-3-yl)acetate(out) + a dicarboxylate(in) = (indol-3-yl)acetate(in) + a dicarboxylate(out). The enzyme catalyses indoxyl sulfate(out) + a dicarboxylate(in) = indoxyl sulfate(in) + a dicarboxylate(out). It catalyses the reaction N-benzoylglycine(out) + a dicarboxylate(in) = N-benzoylglycine(in) + a dicarboxylate(out). It carries out the reaction 3-carboxy-4-methyl-5-propyl-2-furanpropanoate(out) + a dicarboxylate(in) = 3-carboxy-4-methyl-5-propyl-2-furanpropanoate(in) + a dicarboxylate(out). The catalysed reaction is (6R)-L-erythro-5,6,7,8-tetrahydrobiopterin(out) + a dicarboxylate(in) = (6R)-L-erythro-5,6,7,8-tetrahydrobiopterin(in) + a dicarboxylate(out). The enzyme catalyses L-erythro-7,8-dihydrobiopterin(out) + a dicarboxylate(in) = L-erythro-7,8-dihydrobiopterin(in) + a dicarboxylate(out). It catalyses the reaction L-sepiapterin(out) + a dicarboxylate(in) = L-sepiapterin(in) + a dicarboxylate(out). Its function is as follows. Functions as an organic anion/dicarboxylate exchanger that couples organic anion uptake indirectly to the sodium gradient. Transports organic anions such as estrone 3-sulfate (E1S) and urate in exchange for dicarboxylates such as glutarate or ketoglutarate (2-oxoglutarate). Plays an important role in the excretion of endogenous and exogenous organic anions, especially from the kidney and the brain. E1S transport is pH- and chloride-dependent and may also involve E1S/cGMP exchange. Responsible for the transport of prostaglandin E2 (PGE2) and prostaglandin F2(alpha) (PGF2(alpha)) in the basolateral side of the renal tubule. Involved in the transport of neuroactive tryptophan metabolites kynurenate and xanthurenate. Functions as a biopterin transporters involved in the uptake and the secretion of coenzymes tetrahydrobiopterin (BH4), dihydrobiopterin (BH2) and sepiapterin to urine, thereby determining baseline levels of blood biopterins. May be involved in the basolateral transport of steviol, a metabolite of the popular sugar substitute stevioside. May participate in the detoxification/ renal excretion of drugs and xenobiotics, such as the histamine H(2)-receptor antagonists fexofenadine and cimetidine, the antibiotic benzylpenicillin (PCG), the anionic herbicide 2,4-dichloro-phenoxyacetate (2,4-D), the diagnostic agent p-aminohippurate (PAH), the antiviral acyclovir (ACV), and the mycotoxin ochratoxin (OTA), by transporting these exogenous organic anions across the cell membrane in exchange for dicarboxylates such as 2-oxoglutarate. Contributes to the renal uptake of potent uremic toxins (indoxyl sulfate (IS), indole acetate (IA), hippurate/N-benzoylglycine (HA) and 3-carboxy-4-methyl-5-propyl-2-furanpropionate (CMPF)), pravastatin, PCG, E1S and dehydroepiandrosterone sulfate (DHEAS), and is partly involved in the renal uptake of temocaprilat (an angiotensin-converting enzyme (ACE) inhibitor). May contribute to the release of cortisol in the adrenals. Involved in one of the detoxification systems on the choroid plexus (CP), removes substrates such as E1S or taurocholate (TC), PCG, 2,4-D and PAH, from the cerebrospinal fluid (CSF) to the blood for eventual excretion in urine and bile. Regulates the CSF concentration of histamine H(2)-receptor antagonists cimetidine and ranitidine at the CP. Also contributes to the uptake of several other organic compounds such as the prostanoids prostaglandin E(2) and prostaglandin F(2-alpha), L-carnitine, and the therapeutic drugs allopurinol, 6-mercaptopurine (6-MP) and 5-fluorouracil (5-FU). Mediates the uptake from brain of organic anions, such as E1S, PAH, and OTA. Mediates the transport of PAH, PCG, and the statins pravastatin and pitavastatin, from the cerebrum into the blood circulation across the blood-brain barrier (BBB). In summary, plays a role in the efflux of drugs and xenobiotics, helping reduce their undesired toxicological effects on the body. This chain is Organic anion transporter 3 (Slc22a8), found in Rattus norvegicus (Rat).